The sequence spans 712 residues: Eukaryotic translation initiation factor 3 subunit B (712 aa).

Residues 1 to 98 (MSLTEAEYHE…LFVQFETSEM (98 aa)) form a sufficient for interaction with HCR1 and TIF32 region. The segment at 1-224 (MSLTEAEYHE…GVQSWGGADF (224 aa)) is sufficient for interaction with PIC8. The 88-residue stretch at 37 to 124 (NYVVVDGAPI…HRLLVNRLSD (88 aa)) folds into the RRM domain. WD repeat units follow at residues 191–229 (RKFF…SIDK), 230–293 (FMHN…RTFA), 301–339 (QKEM…LLDK), 342–384 (IKID…QTAR), 452–493 (ELKE…DFYA), 513–555 (ITDK…SNKN), and 566–604 (DKFS…YEFT).

This sequence belongs to the eIF-3 subunit B family. Component of the eukaryotic translation initiation factor 3 (eIF-3) complex.

It is found in the cytoplasm. Its function is as follows. RNA-binding component of the eukaryotic translation initiation factor 3 (eIF-3) complex, which is involved in protein synthesis of a specialized repertoire of mRNAs and, together with other initiation factors, stimulates binding of mRNA and methionyl-tRNAi to the 40S ribosome. The eIF-3 complex specifically targets and initiates translation of a subset of mRNAs involved in cell proliferation. This Scheffersomyces stipitis (strain ATCC 58785 / CBS 6054 / NBRC 10063 / NRRL Y-11545) (Yeast) protein is Eukaryotic translation initiation factor 3 subunit B.